Reading from the N-terminus, the 571-residue chain is MSLQPVPHRLLFSDSDDEEDGHSTGEDSAFQESDSPVSRLREKQEGPGGSWEEEEGLGSSPIKSPGHFFMCDSPTYRDLPPASPPGPAASPPDCPGTPPHKTFRKLRLFDTPHTPKSLLSKARGIGSSALRFRGGTLFREAEKLPKPEFTYSTPQVNINPFTPDSLEIQSSTGLCRRRKRALLNDSCGEDMEGSDCELEDEDVRPAKRIPITESNMKSRYATEFHELEKIGSGEFGSVFKCVKRLDGCIYAIKRSKKPMAGSVDEQNALREVYAHAVLGQHPHVVRYYSAWAEDDHMLIQNEYCNGGSLADAISENYRTMQYFTEPELKDLLLQVARGLKYIHSMSLVHMDIKPSNIFISRITVPNTGVEEGDDEDCGSGNVVYKIGDLGHVTRVSSPQVEEGDSRFLANEVLQEDYTHLAKADIFALALTVWCAAGAEPFPTNGDQWHEIRQGKLPRVPQLLSQEFVDLIKLMISPDSEKRPSSMALVKHSVLLSASRKNAEQLRIELNAEKFKNALLQKELKKAQIAKAAAEERALFPDRIATRSTTQSNRTTRLIGKKMNRSVSLTIY.

Residues M1–K101 form a disordered region. Pro residues predominate over residues P81 to P98. Residues F224–L494 form the Protein kinase domain. ATP contacts are provided by residues I230–V238 and K253. Residue D351 is the Proton acceptor of the active site. N356 and D388 together coordinate Mg(2+). Residues K500–F539 are a coiled coil.

This sequence belongs to the protein kinase superfamily. Ser/Thr protein kinase family. WEE1 subfamily. Zygotically expressed. Expressed in regions of the embryo that are devoid of mitotic cells, such as the involuting mesoderm.

The protein resides in the nucleus. The catalysed reaction is L-tyrosyl-[protein] + ATP = O-phospho-L-tyrosyl-[protein] + ADP + H(+). Functionally, acts as a zygotic negative regulator of entry into mitosis (G2 to M transition) by protecting the nucleus from cytoplasmically activated cyclin B1-complexed cdk1 before the onset of mitosis by mediating phosphorylation of cdk1 on 'Tyr-15'. Specifically phosphorylates and inactivates cyclin B1-complexed cdk1 reaching a maximum during G2 phase and a minimum as cells enter M phase. Phosphorylation of cyclin B1-cdk1 occurs exclusively on 'Tyr-15' and phosphorylation of monomeric cdk1 does not occur. Involved in convergent extension of the paraxial mesoderm during neurulation by inhibiting the cell cycle. In Xenopus laevis (African clawed frog), this protein is Wee1-like protein kinase 1-A (wee1-a).